The following is a 1305-amino-acid chain: Cyclin-G-associated kinase (1305 aa).

Residue serine 2 is modified to N-acetylserine. Phosphoserine is present on residues serine 2 and serine 16. A Protein kinase domain is found at 40–315; sequence LRVRRVLAEG…IAEVVRQLQE (276 aa). The active-site Proton acceptor is the aspartate 173. The interval 332–354 is disordered; it reads LEQNGGYGNSGPSRAQPPSGGPV. The Phosphatase tensin-type domain maps to 397–564; sequence SVANYAKGDL…EYVCDMVAEE (168 aa). Serine 454 is modified (phosphoserine). Positions 570-708 constitute a C2 tensin-type domain; that stretch reads SKPMLVKSVV…FQVNLEVEVE (139 aa). Residues 747-856 form a disordered region; the sequence is FGKPELPRQP…TPRLAAGTRQ (110 aa). Serine 768 is subject to Phosphoserine. Threonine 774 carries the phosphothreonine modification. A compositionally biased stretch (polar residues) spans 776–789; the sequence is SDSPQSSSTDTNHF. Residue serine 781 is modified to Phosphoserine. Threonine 792 is modified (phosphothreonine). A compositionally biased stretch (polar residues) spans 805-817; it reads VDNTSPKESQSNL. A phosphoserine mark is found at serine 809, serine 824, and serine 827. A compositionally biased stretch (acidic residues) spans 822–832; it reads DGSEVSDEEEA. Positions 836-848 are enriched in basic and acidic residues; that stretch reads SEERKPGAGEDTP. Residue serine 938 is modified to Phosphoserine. Positions 1044-1141 are disordered; it reads LPGPASMPVP…PQAKPAPRAS (98 aa). The segment covering 1105–1131 has biased composition (polar residues); sequence VGTSATTHKSNSSWQTTRPTAPGTSWP. Position 1122 is an omega-N-methylarginine (arginine 1122). Serine 1171 is modified (phosphoserine). Residues 1241-1305 enclose the J domain; it reads SRWTPVSMAD…FENQGSRPLF (65 aa).

Belongs to the protein kinase superfamily. Ser/Thr protein kinase family.

The protein resides in the cytoplasm. It is found in the perinuclear region. The protein localises to the golgi apparatus. Its subcellular location is the trans-Golgi network. It localises to the cell junction. The protein resides in the focal adhesion. It is found in the cytoplasmic vesicle. The protein localises to the clathrin-coated vesicle. The enzyme catalyses L-seryl-[protein] + ATP = O-phospho-L-seryl-[protein] + ADP + H(+). It catalyses the reaction L-threonyl-[protein] + ATP = O-phospho-L-threonyl-[protein] + ADP + H(+). Associates with cyclin G and CDK5. Seems to act as an auxilin homolog that is involved in the uncoating of clathrin-coated vesicles by Hsc70 in non-neuronal cells. Expression oscillates slightly during the cell cycle, peaking at G1. May play a role in clathrin-mediated endocytosis and intracellular trafficking, and in the dynamics of clathrin assembly/disassembly. This is Cyclin-G-associated kinase from Rattus norvegicus (Rat).